The following is a 298-amino-acid chain: Small ribosomal subunit protein uS2 (298 aa).

Residues 232 to 298 (ETFEGDDIPS…TAEAEEPAAE (67 aa)) are disordered. Residues 234 to 250 (FEGDDIPSAIDFEDETP) show a composition bias toward acidic residues. Residues 251-276 (EPVAEVADAEVAAAEPVAEAAPTAEA) are compositionally biased toward low complexity.

The protein belongs to the universal ribosomal protein uS2 family.

In Acaryochloris marina (strain MBIC 11017), this protein is Small ribosomal subunit protein uS2.